A 117-amino-acid polypeptide reads, in one-letter code: Large ribosomal subunit protein bL20c (117 aa).

The protein belongs to the bacterial ribosomal protein bL20 family.

The protein resides in the plastid. It is found in the chloroplast. Functionally, binds directly to 23S ribosomal RNA and is necessary for the in vitro assembly process of the 50S ribosomal subunit. It is not involved in the protein synthesizing functions of that subunit. This is Large ribosomal subunit protein bL20c from Aethionema grandiflorum (Persian stone-cress).